Reading from the N-terminus, the 47-residue chain is Protein 0.5 (47 aa).

Positions 1 to 23 (MYMLTIGLLTALGLAVGASFGKA) are cleaved as a signal peptide. The helical transmembrane segment at 24–43 (LGVAVGSYFTACIIIGIIKG) threads the bilayer.

It is found in the host membrane. The chain is Protein 0.5 from Escherichia phage T7 (Bacteriophage T7).